The primary structure comprises 89 residues: UPF0223 protein BCG9842_B1176 (89 aa).

The protein belongs to the UPF0223 family.

The polypeptide is UPF0223 protein BCG9842_B1176 (Bacillus cereus (strain G9842)).